Consider the following 434-residue polypeptide: Nicotinate phosphoribosyltransferase (434 aa).

At H242 the chain carries Phosphohistidine; by autocatalysis.

It belongs to the NAPRTase family. In terms of processing, transiently phosphorylated on a His residue during the reaction cycle. Phosphorylation strongly increases the affinity for substrates and increases the rate of nicotinate D-ribonucleotide production. Dephosphorylation regenerates the low-affinity form of the enzyme, leading to product release.

It catalyses the reaction nicotinate + 5-phospho-alpha-D-ribose 1-diphosphate + ATP + H2O = nicotinate beta-D-ribonucleotide + ADP + phosphate + diphosphate. It participates in cofactor biosynthesis; NAD(+) biosynthesis; nicotinate D-ribonucleotide from nicotinate: step 1/1. Functionally, catalyzes the synthesis of beta-nicotinate D-ribonucleotide from nicotinate and 5-phospho-D-ribose 1-phosphate at the expense of ATP. This is Nicotinate phosphoribosyltransferase from Bradyrhizobium diazoefficiens (strain JCM 10833 / BCRC 13528 / IAM 13628 / NBRC 14792 / USDA 110).